A 338-amino-acid polypeptide reads, in one-letter code: tRNA(Ile)-lysidine synthase (338 aa).

23 to 28 (SGGLDS) contributes to the ATP binding site.

This sequence belongs to the tRNA(Ile)-lysidine synthase family.

The protein resides in the cytoplasm. The enzyme catalyses cytidine(34) in tRNA(Ile2) + L-lysine + ATP = lysidine(34) in tRNA(Ile2) + AMP + diphosphate + H(+). Functionally, ligates lysine onto the cytidine present at position 34 of the AUA codon-specific tRNA(Ile) that contains the anticodon CAU, in an ATP-dependent manner. Cytidine is converted to lysidine, thus changing the amino acid specificity of the tRNA from methionine to isoleucine. The chain is tRNA(Ile)-lysidine synthase from Helicobacter pylori (strain J99 / ATCC 700824) (Campylobacter pylori J99).